The primary structure comprises 162 residues: 2-C-methyl-D-erythritol 2,4-cyclodiphosphate synthase (162 aa).

Positions 12 and 14 each coordinate a divalent metal cation. Residues 12–14 (DVH) and 38–39 (HS) contribute to the 4-CDP-2-C-methyl-D-erythritol 2-phosphate site. H46 contributes to the a divalent metal cation binding site. 4-CDP-2-C-methyl-D-erythritol 2-phosphate is bound by residues 60–62 (DIG), 65–69 (FPDTD), and R146.

This sequence belongs to the IspF family. In terms of assembly, homotrimer. It depends on a divalent metal cation as a cofactor.

The enzyme catalyses 4-CDP-2-C-methyl-D-erythritol 2-phosphate = 2-C-methyl-D-erythritol 2,4-cyclic diphosphate + CMP. It functions in the pathway isoprenoid biosynthesis; isopentenyl diphosphate biosynthesis via DXP pathway; isopentenyl diphosphate from 1-deoxy-D-xylulose 5-phosphate: step 4/6. Its function is as follows. Involved in the biosynthesis of isopentenyl diphosphate (IPP) and dimethylallyl diphosphate (DMAPP), two major building blocks of isoprenoid compounds. Catalyzes the conversion of 4-diphosphocytidyl-2-C-methyl-D-erythritol 2-phosphate (CDP-ME2P) to 2-C-methyl-D-erythritol 2,4-cyclodiphosphate (ME-CPP) with a corresponding release of cytidine 5-monophosphate (CMP). This Bordetella bronchiseptica (strain ATCC BAA-588 / NCTC 13252 / RB50) (Alcaligenes bronchisepticus) protein is 2-C-methyl-D-erythritol 2,4-cyclodiphosphate synthase.